The following is a 328-amino-acid chain: Lactamase-like protein nscB (328 aa).

Zn(2+)-binding residues include H97, H99, D101, and H102. The Proton donor/acceptor role is filled by D101.

It belongs to the metallo-beta-lactamase superfamily. Requires Zn(2+) as cofactor.

It participates in secondary metabolite biosynthesis. Lactamase-like protein; part of the gene cluster that mediates the biosynthesis of neosartoricin, a prenylated anthracenone that exhibits T-cell antiproliferative activity, suggestive of a physiological role as an immunosuppressive agent. The non-reducing polyketide synthase nscA probably synthesizes and cyclizes the decaketide backbone. The hydrolase nscB then mediates the product release through hydrolysis followed by spontaneous decarboxylation. The prenyltransferase nscD catalyzes the addition of the dimethylallyl group to the aromatic C5. The FAD-dependent monooxygenase nscC is then responsible for the stereospecific hydroxylation at C2. There is no gene encoding O-acetyltransferase in the nsc gene cluster; thus, the last step of 2-O-acetylation leading to neosartoricin may be catalyzed by an unidentified O-acetyltransferase. The sequence is that of Lactamase-like protein nscB from Neosartorya fischeri (strain ATCC 1020 / DSM 3700 / CBS 544.65 / FGSC A1164 / JCM 1740 / NRRL 181 / WB 181) (Aspergillus fischerianus).